The primary structure comprises 86 residues: Co-chaperonin GroES (86 aa).

This sequence belongs to the GroES chaperonin family. In terms of assembly, heptamer of 7 subunits arranged in a ring. Interacts with the chaperonin GroEL.

It localises to the cytoplasm. Together with the chaperonin GroEL, plays an essential role in assisting protein folding. The GroEL-GroES system forms a nano-cage that allows encapsulation of the non-native substrate proteins and provides a physical environment optimized to promote and accelerate protein folding. GroES binds to the apical surface of the GroEL ring, thereby capping the opening of the GroEL channel. This is Co-chaperonin GroES from Campylobacter lari (strain RM2100 / D67 / ATCC BAA-1060).